The following is a 781-amino-acid chain: Molybdenum cofactor sulfurase (781 aa).

N6-(pyridoxal phosphate)lysine is present on K246. C413 is an active-site residue. An MOSC domain is found at 619 to 781 (GDAVAQWLSE…MTCGDVVIVE (163 aa)). S734 is modified (phosphoserine).

The protein belongs to the class-V pyridoxal-phosphate-dependent aminotransferase family. MOCOS subfamily. Pyridoxal 5'-phosphate is required as a cofactor.

It catalyses the reaction Mo-molybdopterin + L-cysteine + AH2 = thio-Mo-molybdopterin + L-alanine + A + H2O. The protein operates within cofactor biosynthesis; molybdopterin biosynthesis. Its function is as follows. Sulfurates the molybdenum cofactor. Sulfation of molybdenum is essential for xanthine dehydrogenase (XDH) and aldehyde oxidase (ADO) enzymes in which molybdenum cofactor is liganded by 1 oxygen and 1 sulfur atom in active form. This Drosophila erecta (Fruit fly) protein is Molybdenum cofactor sulfurase.